Reading from the N-terminus, the 83-residue chain is Small ribosomal subunit protein uS17 (83 aa).

Belongs to the universal ribosomal protein uS17 family. As to quaternary structure, part of the 30S ribosomal subunit.

In terms of biological role, one of the primary rRNA binding proteins, it binds specifically to the 5'-end of 16S ribosomal RNA. This Magnetococcus marinus (strain ATCC BAA-1437 / JCM 17883 / MC-1) protein is Small ribosomal subunit protein uS17.